Here is a 330-residue protein sequence, read N- to C-terminus: Aspartate--ammonia ligase (330 aa).

Belongs to the class-II aminoacyl-tRNA synthetase family. AsnA subfamily.

The protein localises to the cytoplasm. It carries out the reaction L-aspartate + NH4(+) + ATP = L-asparagine + AMP + diphosphate + H(+). It participates in amino-acid biosynthesis; L-asparagine biosynthesis; L-asparagine from L-aspartate (ammonia route): step 1/1. The sequence is that of Aspartate--ammonia ligase from Streptococcus pyogenes serotype M49 (strain NZ131).